A 76-amino-acid chain; its full sequence is Small ribosomal subunit protein bS18 (76 aa).

Belongs to the bacterial ribosomal protein bS18 family. Part of the 30S ribosomal subunit. Forms a tight heterodimer with protein bS6.

Binds as a heterodimer with protein bS6 to the central domain of the 16S rRNA, where it helps stabilize the platform of the 30S subunit. The sequence is that of Small ribosomal subunit protein bS18 from Desulfitobacterium hafniense (strain Y51).